A 626-amino-acid polypeptide reads, in one-letter code: DNA-directed RNA polymerase subunit gamma (626 aa).

The Zn(2+) site is built by Cys-71, Cys-73, Cys-86, and Cys-89. Mg(2+)-binding residues include Asp-467, Asp-469, and Asp-471.

Belongs to the RNA polymerase beta' chain family. RpoC1 subfamily. In cyanobacteria the RNAP catalytic core is composed of 2 alpha, 1 beta, 1 beta', 1 gamma and 1 omega subunit. When a sigma factor is associated with the core the holoenzyme is formed, which can initiate transcription. The cofactor is Mg(2+). Zn(2+) is required as a cofactor.

The catalysed reaction is RNA(n) + a ribonucleoside 5'-triphosphate = RNA(n+1) + diphosphate. In terms of biological role, DNA-dependent RNA polymerase catalyzes the transcription of DNA into RNA using the four ribonucleoside triphosphates as substrates. This chain is DNA-directed RNA polymerase subunit gamma, found in Microcystis aeruginosa (strain NIES-843 / IAM M-2473).